The chain runs to 538 residues: Pyruvate kinase (538 aa).

Position 45 is a phosphoserine (Ser45). Arg72 contributes to the substrate binding site. 4 residues coordinate K(+): Asn74, Ser76, Asp107, and Thr108. 74 to 77 (NFSH) contacts ATP. 2 residues coordinate ATP: Arg114 and Lys200. A Mg(2+)-binding site is contributed by Glu265. Residues Gly288, Asp289, and Thr321 each coordinate substrate. Asp289 provides a ligand contact to Mg(2+).

It belongs to the pyruvate kinase family. Homotetramer. It depends on Mg(2+) as a cofactor. K(+) is required as a cofactor.

The enzyme catalyses pyruvate + ATP = phosphoenolpyruvate + ADP + H(+). Its pathway is carbohydrate degradation; glycolysis; pyruvate from D-glyceraldehyde 3-phosphate: step 5/5. The protein is Pyruvate kinase (pki1) of Hypocrea jecorina (Trichoderma reesei).